A 415-amino-acid polypeptide reads, in one-letter code: Probable disease resistance protein At5g66890 (415 aa).

The 36-residue stretch at 8-43 (SFDALPHNLRECFLDMASFLEDQRIIASTIIDLWSA) folds into the NB-ARC domain. LRR repeat units lie at residues 229-251 (SLEK…EDVS), 256-278 (SLQE…ISQV), 280-303 (SLKK…GDLR), 304-326 (DLET…IDRL), 328-351 (NLRF…GKLK), and 352-373 (KLEK…VKNL). A coiled-coil region spans residues 239-260 (HVVDALNELEDVSETLQSLQEI).

Belongs to the disease resistance NB-LRR family.

Possible disease resistance protein. This is Probable disease resistance protein At5g66890 from Arabidopsis thaliana (Mouse-ear cress).